A 195-amino-acid chain; its full sequence is Pyridoxal 5'-phosphate synthase subunit PdxT (195 aa).

49-51 (GES) is a binding site for L-glutamine. C81 functions as the Nucleophile in the catalytic mechanism. L-glutamine is bound by residues R113 and 141–142 (IR). Active-site charge relay system residues include H177 and E179.

This sequence belongs to the glutaminase PdxT/SNO family. In terms of assembly, in the presence of PdxS, forms a dodecamer of heterodimers. Only shows activity in the heterodimer.

It catalyses the reaction aldehydo-D-ribose 5-phosphate + D-glyceraldehyde 3-phosphate + L-glutamine = pyridoxal 5'-phosphate + L-glutamate + phosphate + 3 H2O + H(+). The enzyme catalyses L-glutamine + H2O = L-glutamate + NH4(+). Its pathway is cofactor biosynthesis; pyridoxal 5'-phosphate biosynthesis. Its function is as follows. Catalyzes the hydrolysis of glutamine to glutamate and ammonia as part of the biosynthesis of pyridoxal 5'-phosphate. The resulting ammonia molecule is channeled to the active site of PdxS. The protein is Pyridoxal 5'-phosphate synthase subunit PdxT of Mycolicibacterium vanbaalenii (strain DSM 7251 / JCM 13017 / BCRC 16820 / KCTC 9966 / NRRL B-24157 / PYR-1) (Mycobacterium vanbaalenii).